We begin with the raw amino-acid sequence, 818 residues long: Phenylalanine--tRNA ligase beta subunit (818 aa).

A tRNA-binding domain is found at 39–148 (AAELQKFEVA…EDAVVGENFT (110 aa)). The B5 domain occupies 423-498 (SQKKPLDFSA…RIYGYDKIES (76 aa)). Mg(2+) is bound by residues D476, D482, E485, and E486. Residues 724-817 (SDFQANFRDY…ISQKFQGTLR (94 aa)) enclose the FDX-ACB domain.

This sequence belongs to the phenylalanyl-tRNA synthetase beta subunit family. Type 1 subfamily. Tetramer of two alpha and two beta subunits. Mg(2+) is required as a cofactor.

The protein resides in the cytoplasm. The catalysed reaction is tRNA(Phe) + L-phenylalanine + ATP = L-phenylalanyl-tRNA(Phe) + AMP + diphosphate + H(+). This is Phenylalanine--tRNA ligase beta subunit from Rickettsia conorii (strain ATCC VR-613 / Malish 7).